Consider the following 217-residue polypeptide: Small ribosomal subunit protein uS3 (217 aa).

The KH type-2 domain maps to 40–110 (IRDVINKGFN…EVYINIHEVR (71 aa)).

The protein belongs to the universal ribosomal protein uS3 family. Part of the 30S ribosomal subunit. Forms a tight complex with proteins S10 and S14.

In terms of biological role, binds the lower part of the 30S subunit head. Binds mRNA in the 70S ribosome, positioning it for translation. The sequence is that of Small ribosomal subunit protein uS3 from Rickettsia massiliae (strain Mtu5).